The following is a 485-amino-acid chain: Peptidyl-prolyl cis-trans isomerase-like 4 (485 aa).

Positions 1–172 (MSVLLETSAG…IDIRIKHTVI (172 aa)) constitute a PPIase cyclophilin-type domain. Positions 251–329 (NVLFVCKLNP…RRIHVDFSQS (79 aa)) constitute an RRM domain. The interval 377–485 (NYRMVYGEEE…RDENDRRSRR (109 aa)) is disordered. Residues 426-485 (RPRDRSRDRYHKPRDDRRGDRRDRDRRDQDRNRYRDRDHRDRGREKDRYGRDENDRRSRR) are compositionally biased toward basic and acidic residues.

It belongs to the cyclophilin-type PPIase family. PPIL4 subfamily.

Its subcellular location is the nucleus. It carries out the reaction [protein]-peptidylproline (omega=180) = [protein]-peptidylproline (omega=0). In terms of biological role, PPIases accelerate the folding of proteins. It catalyzes the cis-trans isomerization of proline imidic peptide bonds in oligopeptides. The chain is Peptidyl-prolyl cis-trans isomerase-like 4 (CYP6) from Gibberella zeae (strain ATCC MYA-4620 / CBS 123657 / FGSC 9075 / NRRL 31084 / PH-1) (Wheat head blight fungus).